A 364-amino-acid chain; its full sequence is Phosphoserine aminotransferase (364 aa).

Arg-41 lines the L-glutamate pocket. Pyridoxal 5'-phosphate contacts are provided by residues Ala-75–Ser-76, Trp-100, Thr-155, Asp-175, and Gln-198. Lys-199 bears the N6-(pyridoxal phosphate)lysine mark. Asn-239–Thr-240 provides a ligand contact to pyridoxal 5'-phosphate.

The protein belongs to the class-V pyridoxal-phosphate-dependent aminotransferase family. SerC subfamily. In terms of assembly, homodimer. Pyridoxal 5'-phosphate is required as a cofactor.

It localises to the cytoplasm. It carries out the reaction O-phospho-L-serine + 2-oxoglutarate = 3-phosphooxypyruvate + L-glutamate. It catalyses the reaction 4-(phosphooxy)-L-threonine + 2-oxoglutarate = (R)-3-hydroxy-2-oxo-4-phosphooxybutanoate + L-glutamate. It participates in amino-acid biosynthesis; L-serine biosynthesis; L-serine from 3-phospho-D-glycerate: step 2/3. Functionally, catalyzes the reversible conversion of 3-phosphohydroxypyruvate to phosphoserine and of 3-hydroxy-2-oxo-4-phosphonooxybutanoate to phosphohydroxythreonine. The protein is Phosphoserine aminotransferase of Streptococcus thermophilus (strain CNRZ 1066).